A 145-amino-acid polypeptide reads, in one-letter code: Histone H2B.7 (145 aa).

Positions 1–30 are enriched in basic and acidic residues; that stretch reads MAPKAEKKPAEKKPVEEKSKAEKAPAEKKP. The interval 1–53 is disordered; that stretch reads MAPKAEKKPAEKKPVEEKSKAEKAPAEKKPKAGKKLPKEAGAGGDKKKKMKKK. At A2 the chain carries N,N,N-trimethylalanine; alternate. A2 carries the post-translational modification N,N-dimethylalanine; alternate. Position 2 is an N-methylalanine; alternate (A2). K4 carries the post-translational modification N6-methyllysine; partial. N6-acetyllysine is present on residues K7 and K12. N6,N6-dimethyllysine is present on K13. 3 positions are modified to N6-acetyllysine: K23, K28, and K34. K35 carries the N6-acetyllysine; partial modification. K141 participates in a covalent cross-link: Glycyl lysine isopeptide (Lys-Gly) (interchain with G-Cter in ubiquitin).

It belongs to the histone H2B family. The nucleosome is a histone octamer containing two molecules each of H2A, H2B, H3 and H4 assembled in one H3-H4 heterotetramer and two H2A-H2B heterodimers. The octamer wraps approximately 147 bp of DNA. Post-translationally, can be acetylated to form H2BK6ac, H2BK11ac, H2BK22ac, H2BK27ac H2BK33ac and H2BK34ac. Mono-, di- or trimethylated at the N-terminus to form H2BA1me1/2/3. H2BA1me2 and H2BA1me3 may be methylated and/or acetylated to form H2BA1me2K3me1, H2BA1me2K3me1K6ac, H2BA1me2K6ac H2BA1me3K6ac, H2BA1me3K6acK11ac and H2BA1me2K3me1K6acK11ac. In terms of processing, monoubiquitinated by BRE1 to form H2BK143ub1 and deubiquitinated by UBP26. Required for heterochromatic histone H3 di- and trimethylation at H3K4me. May give a specific tag for epigenetic transcriptional activation.

The protein localises to the nucleus. It is found in the chromosome. Functionally, core component of nucleosome. Nucleosomes wrap and compact DNA into chromatin, limiting DNA accessibility to the cellular machineries which require DNA as a template. Histones thereby play a central role in transcription regulation, DNA repair, DNA replication and chromosomal stability. DNA accessibility is regulated via a complex set of post-translational modifications of histones, also called histone code, and nucleosome remodeling. This chain is Histone H2B.7, found in Arabidopsis thaliana (Mouse-ear cress).